The sequence spans 428 residues: Dihydroorotase (428 aa).

Residues H60 and H62 each contribute to the Zn(2+) site. Residues H62 to R64 and N94 contribute to the substrate site. Zn(2+) is bound by residues D152, H179, and H232. N278 serves as a coordination point for substrate. D305 is a Zn(2+) binding site. D305 is an active-site residue. H309 lines the substrate pocket.

This sequence belongs to the metallo-dependent hydrolases superfamily. DHOase family. Class I DHOase subfamily. It depends on Zn(2+) as a cofactor.

The catalysed reaction is (S)-dihydroorotate + H2O = N-carbamoyl-L-aspartate + H(+). It participates in pyrimidine metabolism; UMP biosynthesis via de novo pathway; (S)-dihydroorotate from bicarbonate: step 3/3. Catalyzes the reversible cyclization of carbamoyl aspartate to dihydroorotate. This is Dihydroorotase from Ruminiclostridium cellulolyticum (strain ATCC 35319 / DSM 5812 / JCM 6584 / H10) (Clostridium cellulolyticum).